Here is a 491-residue protein sequence, read N- to C-terminus: Dipeptide and tripeptide permease B (491 aa).

Residues 1–26 (MNNTAPGLLHQPKPFFMIFFVELWER) are Cytoplasmic-facing. The helical transmembrane segment at 27 to 47 (FGYYGVQGILAVFFVKQLGFS) threads the bilayer. At 48 to 51 (QEQA) the chain is on the periplasmic side. The chain crosses the membrane as a helical span at residues 52 to 72 (FITFGAFAALVYGLISIGGYV). Over 73 to 81 (GDHLLGTKR) the chain is Cytoplasmic. Residues 82–102 (TMVLGAIVLALGYFMTGMSLL) form a helical membrane-spanning segment. Topologically, residues 103 to 105 (KPE) are periplasmic. A helical membrane pass occupies residues 106–126 (MIFIALGTIAVGNGLFKANPA). Topologically, residues 127–145 (SLLSKCYPPKDPRLDGAFT) are cytoplasmic. Residues 146–166 (LFYMSINIGSLLSLSLAPIIA) form a helical membrane-spanning segment. The Periplasmic portion of the chain corresponds to 167-171 (ERFGY). A helical membrane pass occupies residues 172 to 192 (AVTYNLCGLGLIIALLVYFAC). Residues 193–210 (RGMVRSIGSAPDHQPLNY) are Cytoplasmic-facing. The chain crosses the membrane as a helical span at residues 211 to 231 (GKLLLVLAGAVVMIFLCAWLM). A topological domain (periplasmic) is located at residue His-232. Residues 233 to 253 (NVGVANIVLIAVSAVVLYFFF) traverse the membrane as a helical segment. Residues 254–266 (REAFKQDKTGRNR) are Cytoplasmic-facing. A helical membrane pass occupies residues 267–287 (MFVAFILMIEAVLFYILYAQM). The Periplasmic segment spans residues 288 to 312 (PTSLNFFAINNVRHELLGFAINPVS). Residues 313-335 (FQALNPFWVVVASPILASIYTRL) traverse the membrane as a helical segment. Residues 336–349 (GSRGRDMTMPTKFT) are Cytoplasmic-facing. A helical membrane pass occupies residues 350 to 370 (LGMLLCSLGFLTAAAAGMWFA). Residues 371-378 (DAQGLTSP) lie on the Periplasmic side of the membrane. The chain crosses the membrane as a helical span at residues 379 to 399 (WFVVLVYLFQSLGELMISALG). At 400 to 423 (LAMVAALVPQYLMGFILGMWFLTQ) the chain is on the cytoplasmic side. Residues 424-444 (AAAFLLGGYVATFTAVPAGIH) form a helical membrane-spanning segment. Over 445–454 (DPLQTLPIYT) the chain is Periplasmic. The chain crosses the membrane as a helical span at residues 455–475 (GVFGKIGIATLIVTLVMAAMV). Residues 476–491 (PWLNRMMNTPADGQKA) are Cytoplasmic-facing.

It belongs to the major facilitator superfamily. Proton-dependent oligopeptide transporter (POT/PTR) (TC 2.A.17) family. DtpB subfamily.

The protein localises to the cell inner membrane. Proton-dependent permease that transports di- and tripeptides. This is Dipeptide and tripeptide permease B from Edwardsiella piscicida.